A 209-amino-acid polypeptide reads, in one-letter code: Probable nicotinate-nucleotide adenylyltransferase (209 aa).

The protein belongs to the NadD family.

The catalysed reaction is nicotinate beta-D-ribonucleotide + ATP + H(+) = deamido-NAD(+) + diphosphate. It functions in the pathway cofactor biosynthesis; NAD(+) biosynthesis; deamido-NAD(+) from nicotinate D-ribonucleotide: step 1/1. Functionally, catalyzes the reversible adenylation of nicotinate mononucleotide (NaMN) to nicotinic acid adenine dinucleotide (NaAD). This chain is Probable nicotinate-nucleotide adenylyltransferase, found in Hydrogenovibrio crunogenus (strain DSM 25203 / XCL-2) (Thiomicrospira crunogena).